The sequence spans 380 residues: Cytosolic acyl coenzyme A thioester hydrolase (380 aa).

In terms of domain architecture, HotDog ACOT-type 1 spans 50 to 168 (PCGACITGRI…TLWYVPLSLK (119 aa)). Residue N66 is part of the active site. N6-acetyllysine is present on residues K168 and K198. The HotDog ACOT-type 2 domain occupies 224-338 (SYSQSSLIHL…FFTYVSLSQE (115 aa)). Residue D255 is part of the active site. K283 is modified (N6-acetyllysine). The interval 350–380 (ETEDEKKRFEEGKGRYLQMKAKRQGHAEPQP) is disordered. Residues 353–363 (DEKKRFEEGKG) show a composition bias toward basic and acidic residues.

As to quaternary structure, homohexamer. As to expression, isoform 4 is expressed exclusively in brain.

The protein localises to the cytoplasm. The protein resides in the cytosol. Its subcellular location is the mitochondrion. The catalysed reaction is hexadecanoyl-CoA + H2O = hexadecanoate + CoA + H(+). It catalyses the reaction octanoyl-CoA + H2O = octanoate + CoA + H(+). The enzyme catalyses dodecanoyl-CoA + H2O = dodecanoate + CoA + H(+). It carries out the reaction (9Z)-octadecenoyl-CoA + H2O = (9Z)-octadecenoate + CoA + H(+). The catalysed reaction is tetradecanoyl-CoA + H2O = tetradecanoate + CoA + H(+). It catalyses the reaction decanoyl-CoA + H2O = decanoate + CoA + H(+). The enzyme catalyses octadecanoyl-CoA + H2O = octadecanoate + CoA + H(+). The protein operates within lipid metabolism; fatty acid metabolism. In terms of biological role, catalyzes the hydrolysis of acyl-CoAs into free fatty acids and coenzyme A (CoASH), regulating their respective intracellular levels. Preferentially hydrolyzes palmitoyl-CoA, but has a broad specificity acting on other fatty acyl-CoAs with chain-lengths of C8-C18. May play an important physiological function in brain. In Homo sapiens (Human), this protein is Cytosolic acyl coenzyme A thioester hydrolase (ACOT7).